The following is a 224-amino-acid chain: Heme response regulator HssR (224 aa).

The Response regulatory domain occupies 3-116 (NCLIVDDDKK…ELLFRIKAVL (114 aa)). A 4-aspartylphosphate modification is found at D52. Residues 124-222 (DNELQLGNLI…VRGQGYRVDQ (99 aa)) constitute a DNA-binding region (ompR/PhoB-type).

Post-translationally, phosphorylated by HssS.

The protein localises to the cytoplasm. In terms of biological role, member of the two-component regulatory system HssS/HssR involved in intracellular heme homeostasis and tempering of staphylococcal virulence. Phosphorylated HssR binds to a direct repeat sequence within hrtAB promoter and activates the expression of hrtAB, an efflux pump, in response to extracellular heme, hemin, hemoglobin or blood. The sequence is that of Heme response regulator HssR (hssR) from Staphylococcus epidermidis (strain ATCC 35984 / DSM 28319 / BCRC 17069 / CCUG 31568 / BM 3577 / RP62A).